The primary structure comprises 214 residues: Uridine kinase (214 aa).

Position 11 to 18 (11 to 18 (GGSGSGKT)) interacts with ATP.

The protein belongs to the uridine kinase family.

The protein resides in the cytoplasm. The catalysed reaction is uridine + ATP = UMP + ADP + H(+). It carries out the reaction cytidine + ATP = CMP + ADP + H(+). Its pathway is pyrimidine metabolism; CTP biosynthesis via salvage pathway; CTP from cytidine: step 1/3. It functions in the pathway pyrimidine metabolism; UMP biosynthesis via salvage pathway; UMP from uridine: step 1/1. This is Uridine kinase from Brevibacillus brevis (strain 47 / JCM 6285 / NBRC 100599).